The primary structure comprises 434 residues: Enolase (434 aa).

Residue glutamine 165 coordinates (2R)-2-phosphoglycerate. Glutamate 207 (proton donor) is an active-site residue. Mg(2+)-binding residues include aspartate 244, glutamate 291, and aspartate 318. Lysine 343, arginine 372, serine 373, and lysine 394 together coordinate (2R)-2-phosphoglycerate. Lysine 343 (proton acceptor) is an active-site residue.

Belongs to the enolase family. It depends on Mg(2+) as a cofactor.

The protein resides in the cytoplasm. The protein localises to the secreted. Its subcellular location is the cell surface. It carries out the reaction (2R)-2-phosphoglycerate = phosphoenolpyruvate + H2O. The protein operates within carbohydrate degradation; glycolysis; pyruvate from D-glyceraldehyde 3-phosphate: step 4/5. In terms of biological role, catalyzes the reversible conversion of 2-phosphoglycerate (2-PG) into phosphoenolpyruvate (PEP). It is essential for the degradation of carbohydrates via glycolysis. This chain is Enolase, found in Staphylococcus aureus (strain USA300 / TCH1516).